The primary structure comprises 416 residues: tRNA(Met) cytidine acetate ligase (416 aa).

Residues 7 to 20 (VVEYNPFHNGHLYH), glycine 101, asparagine 163, and arginine 188 contribute to the ATP site.

It belongs to the TmcAL family.

The protein localises to the cytoplasm. The enzyme catalyses cytidine(34) in elongator tRNA(Met) + acetate + ATP = N(4)-acetylcytidine(34) in elongator tRNA(Met) + AMP + diphosphate. Functionally, catalyzes the formation of N(4)-acetylcytidine (ac(4)C) at the wobble position of elongator tRNA(Met), using acetate and ATP as substrates. First activates an acetate ion to form acetyladenylate (Ac-AMP) and then transfers the acetyl group to tRNA to form ac(4)C34. The chain is tRNA(Met) cytidine acetate ligase from Bacillus licheniformis (strain ATCC 14580 / DSM 13 / JCM 2505 / CCUG 7422 / NBRC 12200 / NCIMB 9375 / NCTC 10341 / NRRL NRS-1264 / Gibson 46).